The primary structure comprises 321 residues: Phosphoenolpyruvate transferase (321 aa).

Asp51 provides a ligand contact to 7,8-didemethyl-8-hydroxy-5-deazariboflavin.

It belongs to the CofD family. In terms of assembly, homodimer. It depends on Mg(2+) as a cofactor.

It catalyses the reaction enolpyruvoyl-2-diphospho-5'-guanosine + 7,8-didemethyl-8-hydroxy-5-deazariboflavin = dehydro coenzyme F420-0 + GMP + H(+). The protein operates within cofactor biosynthesis; coenzyme F420 biosynthesis. Its function is as follows. Catalyzes the transfer of the phosphoenolpyruvate moiety from enoylpyruvoyl-2-diphospho-5'-guanosine (EPPG) to 7,8-didemethyl-8-hydroxy-5-deazariboflavin (FO) with the formation of dehydro coenzyme F420-0 and GMP. This is Phosphoenolpyruvate transferase from Kitasatospora aureofaciens (Streptomyces aureofaciens).